Reading from the N-terminus, the 80-residue chain is Large ribosomal subunit protein uL29 (80 aa).

This sequence belongs to the universal ribosomal protein uL29 family.

The polypeptide is Large ribosomal subunit protein uL29 (rpmC) (Mycobacterium leprae (strain TN)).